The sequence spans 136 residues: Protein LITTLE ZIPPER 1 (136 aa).

Positions 97–122 (ENQNIIRENEKLKKKALLLHQENKTL) form a coiled coil.

In terms of assembly, interacts with REV. In terms of tissue distribution, expressed in the adaxial epidermis of the cotyledons and in the vascular cylinder of wild-type torpedo stage embryos.

Competitive inhibitor of the HD-ZIPIII transcription factors in shoot apical meristem (SAM) development. Acts by forming non-functional heterodimers. Part of a negative feedback loop. Essential for proper functioning of stem cells in the SAM. The sequence is that of Protein LITTLE ZIPPER 1 from Arabidopsis thaliana (Mouse-ear cress).